A 111-amino-acid polypeptide reads, in one-letter code: uncharacterized protein (111 aa).

A lipid anchor (N-myristoyl glycine; by host) is attached at Gly-2.

This is an uncharacterized protein from Acanthamoeba polyphaga mimivirus (APMV).